The primary structure comprises 188 residues: D-glycero-beta-D-manno-heptose-1,7-bisphosphate 7-phosphatase (188 aa).

The active-site Nucleophile is aspartate 11. Residues aspartate 11 and aspartate 13 each contribute to the Mg(2+) site. Residues 11 to 13 (DRD), 19 to 22 (DHGY), and 53 to 56 (TNQS) contribute to the substrate site. Aspartate 13 acts as the Proton donor in catalysis. Cysteine 92, histidine 94, cysteine 107, and cysteine 109 together coordinate Zn(2+). 110-111 (RK) serves as a coordination point for substrate. Mg(2+) is bound by residues aspartate 136 and lysine 137. Lysine 137 serves as a coordination point for substrate.

It belongs to the GmhB family. As to quaternary structure, monomer. Mg(2+) serves as cofactor. The cofactor is Zn(2+).

Its subcellular location is the cytoplasm. It catalyses the reaction D-glycero-beta-D-manno-heptose 1,7-bisphosphate + H2O = D-glycero-beta-D-manno-heptose 1-phosphate + phosphate. It participates in nucleotide-sugar biosynthesis; ADP-L-glycero-beta-D-manno-heptose biosynthesis; ADP-L-glycero-beta-D-manno-heptose from D-glycero-beta-D-manno-heptose 7-phosphate: step 2/4. The protein operates within bacterial outer membrane biogenesis; LPS core biosynthesis. Converts the D-glycero-beta-D-manno-heptose 1,7-bisphosphate intermediate into D-glycero-beta-D-manno-heptose 1-phosphate by removing the phosphate group at the C-7 position. In Yersinia pestis, this protein is D-glycero-beta-D-manno-heptose-1,7-bisphosphate 7-phosphatase (gmhB).